The following is a 122-amino-acid chain: Large ribosomal subunit protein uL14 (122 aa).

Belongs to the universal ribosomal protein uL14 family. Part of the 50S ribosomal subunit. Forms a cluster with proteins L3 and L19. In the 70S ribosome, L14 and L19 interact and together make contacts with the 16S rRNA in bridges B5 and B8.

Binds to 23S rRNA. Forms part of two intersubunit bridges in the 70S ribosome. In Nitrosomonas eutropha (strain DSM 101675 / C91 / Nm57), this protein is Large ribosomal subunit protein uL14.